A 323-amino-acid chain; its full sequence is Putative CRISPR-associated protein SSO1401 (323 aa).

In terms of assembly, sometimes seen associated with the aCascade ribonucleoprotein complex, minimally composed of Csa2 and Cas5a, which binds crRNA. Other probable components of aCascade in strain P1 are Cas6 and Csa5, while SSO1399, Cas5b (SSO1400) and SSO1401 have sometimes been seen weakly associated. The Csa2-Cas5a-crRNA complex also binds target DNA homologous to crRNA, probably forming an R-loop. Purified aCascade forms a filament about 6 nm in width.

Its function is as follows. CRISPR (clustered regularly interspaced short palindromic repeat) is an adaptive immune system that provides protection against mobile genetic elements (viruses, transposable elements and conjugative plasmids). CRISPR clusters contain spacers, sequences complementary to antecedent mobile elements, and target invading nucleic acids. CRISPR clusters are transcribed and processed into CRISPR RNA (crRNA). The polypeptide is Putative CRISPR-associated protein SSO1401 (Saccharolobus solfataricus (strain ATCC 35092 / DSM 1617 / JCM 11322 / P2) (Sulfolobus solfataricus)).